Reading from the N-terminus, the 214-residue chain is Thymidylate kinase (214 aa).

10–17 is a binding site for ATP; sequence GIDGCGKT.

The protein belongs to the thymidylate kinase family.

It catalyses the reaction dTMP + ATP = dTDP + ADP. In terms of biological role, phosphorylation of dTMP to form dTDP in both de novo and salvage pathways of dTTP synthesis. This Prochlorococcus marinus subsp. pastoris (strain CCMP1986 / NIES-2087 / MED4) protein is Thymidylate kinase.